The primary structure comprises 153 residues: Ubiquitin/ISG15-conjugating enzyme E2 L6 (153 aa).

In terms of domain architecture, UBC core spans 2-149 (MASMRVVKEL…AEEFTLRFGV (148 aa)). Cys-86 acts as the Glycyl thioester intermediate in catalysis.

It belongs to the ubiquitin-conjugating enzyme family. Interacts with RNF19A, RNF19B and RNF144B. Interacts with FLT3 (tyrosine phosphorylated). ISGylated. As to expression, present in natural killer cells (at protein level).

It catalyses the reaction S-ubiquitinyl-[E1 ubiquitin-activating enzyme]-L-cysteine + [E2 ubiquitin-conjugating enzyme]-L-cysteine = [E1 ubiquitin-activating enzyme]-L-cysteine + S-ubiquitinyl-[E2 ubiquitin-conjugating enzyme]-L-cysteine.. Its pathway is protein modification; protein ubiquitination. Its function is as follows. Catalyzes the covalent attachment of ubiquitin or ISG15 to other proteins. Functions in the E6/E6-AP-induced ubiquitination of p53/TP53. Promotes ubiquitination and subsequent proteasomal degradation of FLT3. This chain is Ubiquitin/ISG15-conjugating enzyme E2 L6 (UBE2L6), found in Homo sapiens (Human).